We begin with the raw amino-acid sequence, 69 residues long: Large ribosomal subunit protein bL31 (69 aa).

The Zn(2+) site is built by Cys-16, Cys-18, Cys-36, and Cys-39.

Belongs to the bacterial ribosomal protein bL31 family. Type A subfamily. Part of the 50S ribosomal subunit. It depends on Zn(2+) as a cofactor.

Binds the 23S rRNA. The sequence is that of Large ribosomal subunit protein bL31 from Ruminiclostridium cellulolyticum (strain ATCC 35319 / DSM 5812 / JCM 6584 / H10) (Clostridium cellulolyticum).